Reading from the N-terminus, the 471-residue chain is Alpha-galactosidase (471 aa).

The signal sequence occupies residues methionine 1 to glycine 18. Cysteine 42 and cysteine 74 are disulfide-bonded. Substrate is bound by residues aspartate 72 and aspartate 73. An N-linked (GlcNAc...) asparagine glycan is attached at asparagine 82. Cysteine 121 and cysteine 151 are joined by a disulfide. Lysine 147 serves as a coordination point for substrate. The active-site Nucleophile is aspartate 149. Asparagine 175 is a glycosylation site (N-linked (GlcNAc...) asparagine). Position 205 (arginine 205) interacts with substrate. The active-site Proton donor is the aspartate 209. 2 disulfides stabilise this stretch: cysteine 221-cysteine 237 and cysteine 223-cysteine 230. Glutamine 251 is a binding site for substrate. 7 N-linked (GlcNAc...) asparagine glycosylation sites follow: asparagine 270, asparagine 403, asparagine 412, asparagine 417, asparagine 422, asparagine 435, and asparagine 454.

Belongs to the glycosyl hydrolase 27 family. In terms of assembly, homotetramer.

It localises to the secreted. The enzyme catalyses Hydrolysis of terminal, non-reducing alpha-D-galactose residues in alpha-D-galactosides, including galactose oligosaccharides, galactomannans and galactolipids.. The chain is Alpha-galactosidase (MEL) from Saccharomyces pastorianus (strain ATCC 76529 / Carlsberg bottom yeast no.1 / CBS 1513 / CLIB 176 / NBRC 1167 / NCYC 396 / NRRL Y-12693) (Saaz-type lager yeast).